Reading from the N-terminus, the 737-residue chain is Autophagy-related protein 22 (737 aa).

Residues 115 to 154 (RMSPANAGDNSDSYPYGDDTDGDSSSGLPPPRYPGDDTRP) are disordered. The span at 125-141 (SDSYPYGDDTDGDSSSG) shows a compositional bias: low complexity. 4 consecutive transmembrane segments (helical) span residues 166–186 (YAFA…PILL), 232–252 (SFAM…VVSI), 264–284 (KLLL…IFIS), and 289–309 (LIGA…FVLL). The tract at residues 327–353 (GDYGSPGYATTEEGDDEDDEYQEDSTR) is disordered. A compositionally biased stretch (acidic residues) spans 338–349 (EEGDDEDDEYQE). Asparagine 354 carries N-linked (GlcNAc...) asparagine glycosylation. A helical transmembrane segment spans residues 395–415 (GIGIGYIAGLFLQCVAIAILI). Asparagine 419 is a glycosylation site (N-linked (GlcNAc...) asparagine). Helical transmembrane passes span 426 to 446 (IVLC…AMWL), 487 to 507 (LVDI…IATT), 524 to 544 (WALG…AFSW), 559 to 579 (ILAC…GYLP), 593 to 613 (WEMY…SGYC), 632 to 652 (LYAI…GAII), and 661 to 681 (AFWF…FINV).

The protein belongs to the ATG22 family.

It is found in the vacuole membrane. Vacuolar effluxer which mediate the efflux of amino acids resulting from autophagic degradation. The release of autophagic amino acids allows the maintenance of protein synthesis and viability during nitrogen starvation. This chain is Autophagy-related protein 22 (apg-11), found in Neurospora crassa (strain ATCC 24698 / 74-OR23-1A / CBS 708.71 / DSM 1257 / FGSC 987).